Reading from the N-terminus, the 71-residue chain is Small ribosomal subunit protein bS21 (71 aa).

Belongs to the bacterial ribosomal protein bS21 family.

This is Small ribosomal subunit protein bS21 from Buchnera aphidicola subsp. Cinara cedri (strain Cc).